We begin with the raw amino-acid sequence, 190 residues long: Potassium-transporting ATPase KdpC subunit (190 aa).

The helical transmembrane segment at 10 to 30 (TFIFLLLITGGVYPLLTTVLG) threads the bilayer.

Belongs to the KdpC family. In terms of assembly, the system is composed of three essential subunits: KdpA, KdpB and KdpC.

The protein resides in the cell inner membrane. Functionally, part of the high-affinity ATP-driven potassium transport (or Kdp) system, which catalyzes the hydrolysis of ATP coupled with the electrogenic transport of potassium into the cytoplasm. This subunit acts as a catalytic chaperone that increases the ATP-binding affinity of the ATP-hydrolyzing subunit KdpB by the formation of a transient KdpB/KdpC/ATP ternary complex. The sequence is that of Potassium-transporting ATPase KdpC subunit from Escherichia coli (strain K12 / MC4100 / BW2952).